A 141-amino-acid chain; its full sequence is Hemoglobin subunit alpha-2 (141 aa).

The Globin domain occupies valine 1 to arginine 141. Residue histidine 58 coordinates O2. Histidine 87 lines the heme b pocket.

Belongs to the globin family. In terms of assembly, heterotetramer of two alpha chains and two beta chains. Red blood cells.

Involved in oxygen transport from the lung to the various peripheral tissues. This Tachyglossus aculeatus aculeatus (Southeast Australian short-beaked echidna) protein is Hemoglobin subunit alpha-2.